A 208-amino-acid polypeptide reads, in one-letter code: 2-phospho-L-lactate guanylyltransferase (208 aa).

Belongs to the CofC family. In terms of assembly, homodimer.

The enzyme catalyses (2S)-2-phospholactate + GTP + H(+) = (2S)-lactyl-2-diphospho-5'-guanosine + diphosphate. It functions in the pathway cofactor biosynthesis; coenzyme F420 biosynthesis. Guanylyltransferase that catalyzes the activation of (2S)-2-phospholactate (2-PL) as (2S)-lactyl-2-diphospho-5'-guanosine, via the condensation of 2-PL with GTP. It is involved in the biosynthesis of coenzyme F420, a hydride carrier cofactor. The polypeptide is 2-phospho-L-lactate guanylyltransferase (Methanosarcina acetivorans (strain ATCC 35395 / DSM 2834 / JCM 12185 / C2A)).